A 101-amino-acid polypeptide reads, in one-letter code: Small ribosomal subunit protein uS14 (101 aa).

The span at 1 to 10 (MAKKSAIEKN) shows a compositional bias: basic and acidic residues. Positions 1-23 (MAKKSAIEKNNRRKKMTKNAAPK) are disordered. Basic residues predominate over residues 11–23 (NRRKKMTKNAAPK).

It belongs to the universal ribosomal protein uS14 family. In terms of assembly, part of the 30S ribosomal subunit. Contacts proteins S3 and S10.

In terms of biological role, binds 16S rRNA, required for the assembly of 30S particles and may also be responsible for determining the conformation of the 16S rRNA at the A site. In Rhodopseudomonas palustris (strain TIE-1), this protein is Small ribosomal subunit protein uS14.